A 61-amino-acid chain; its full sequence is Large ribosomal subunit protein uL30 (61 aa).

It belongs to the universal ribosomal protein uL30 family. Part of the 50S ribosomal subunit.

In Chlorobium luteolum (strain DSM 273 / BCRC 81028 / 2530) (Pelodictyon luteolum), this protein is Large ribosomal subunit protein uL30.